The following is a 404-amino-acid chain: MPMNVETRETKKVLNHLPSEETVEKTLKRLQTFSGDQSVVVGLSGGVDSSLTAALLCKAGWDVEGLTLWLMKGKGSCCSDGLVDAAGICDQLGIKHHIVDSKEIFQKEIINNVLKGYEEGITPLPCSRCNKSVKFSEMLKWVKENKNIEKIATGHYARIRYSNESFNENDLPSNGIKRHKLLRGKDLNKDQSYFLYDLPQEILGRTIFPLGELTKEITRIEALKHSLKTAKKPESQDLCLAEHYGSMNAFIDKYLPQKKGEVVLKSGQIIGSHNGIQHFTIGQRKGLGIAWEVPLHVVEIDASLNRVIVAPREDSGKSECIVKDINWVSIEAPQEPIKVEVQIRYRSKAVKAKLIPIFDSNKENYCYQCHIHFEEDQFSITPGQAAVFYMGDYVLGGGLISKEY.

Residues 42–49 and Leu68 each bind ATP; that span reads GLSGGVDS. Cys129 acts as the Nucleophile in catalysis. A disulfide bridge connects residues Cys129 and Cys239. ATP is bound at residue Gly154. The segment at 189-191 is interaction with tRNA; the sequence is KDQ. Catalysis depends on Cys239, which acts as the Cysteine persulfide intermediate. An interaction with tRNA region spans residues 344-345; it reads RY.

The protein belongs to the MnmA/TRMU family.

It localises to the cytoplasm. The catalysed reaction is S-sulfanyl-L-cysteinyl-[protein] + uridine(34) in tRNA + AH2 + ATP = 2-thiouridine(34) in tRNA + L-cysteinyl-[protein] + A + AMP + diphosphate + H(+). In terms of biological role, catalyzes the 2-thiolation of uridine at the wobble position (U34) of tRNA, leading to the formation of s(2)U34. This is tRNA-specific 2-thiouridylase MnmA from Prochlorococcus marinus (strain NATL1A).